We begin with the raw amino-acid sequence, 185 residues long: Inner membrane-spanning protein YciB (185 aa).

5 helical membrane passes run 27 to 47 (IVLV…YGIV), 53 to 73 (IMAS…EIRY), 76 to 96 (WKVT…QFQF), 118 to 138 (TLNL…IYIS), and 149 to 169 (FKSF…GVYI).

It belongs to the YciB family.

It localises to the cell inner membrane. In terms of biological role, plays a role in cell envelope biogenesis, maintenance of cell envelope integrity and membrane homeostasis. This chain is Inner membrane-spanning protein YciB, found in Haemophilus influenzae (strain 86-028NP).